The following is a 72-amino-acid chain: MKQGIHPEYKEITATCSCGNIIKTKSTLCENIHIDVCSSCHPFYTGKQKVLDTGGRIDRFKKRFGGRMGRSS.

Residues Cys-16, Cys-18, Cys-37, and Cys-40 each coordinate Zn(2+).

Belongs to the bacterial ribosomal protein bL31 family. Type A subfamily. In terms of assembly, part of the 50S ribosomal subunit. It depends on Zn(2+) as a cofactor.

Binds the 23S rRNA. The protein is Large ribosomal subunit protein bL31 of Hahella chejuensis (strain KCTC 2396).